Reading from the N-terminus, the 291-residue chain is Protease HtpX homolog (291 aa).

The next 2 helical transmembrane spans lie at 4–24 (VVLFLLTNLAVMLVLSVSARI) and 38–58 (MGMLLVFAALIGFGGSFISLL). Residue H144 participates in Zn(2+) binding. The active site involves E145. A Zn(2+)-binding site is contributed by H148. A run of 2 helical transmembrane segments spans residues 152–172 (GDMVTLTLIQGVVNTFVIFLS) and 199–219 (ISSIAFEIMFGILASVVVMCF). Position 224 (E224) interacts with Zn(2+).

The protein belongs to the peptidase M48B family. It depends on Zn(2+) as a cofactor.

Its subcellular location is the cell inner membrane. This chain is Protease HtpX homolog, found in Chlorobium limicola (strain DSM 245 / NBRC 103803 / 6330).